The sequence spans 365 residues: UDP-N-acetylglucosamine--N-acetylmuramyl-(pentapeptide) pyrophosphoryl-undecaprenol N-acetylglucosamine transferase (365 aa).

UDP-N-acetyl-alpha-D-glucosamine contacts are provided by residues 13–15 (TGG), Asn-125, Arg-165, Ser-192, and Gln-293.

Belongs to the glycosyltransferase 28 family. MurG subfamily.

The protein localises to the cell inner membrane. It catalyses the reaction di-trans,octa-cis-undecaprenyl diphospho-N-acetyl-alpha-D-muramoyl-L-alanyl-D-glutamyl-meso-2,6-diaminopimeloyl-D-alanyl-D-alanine + UDP-N-acetyl-alpha-D-glucosamine = di-trans,octa-cis-undecaprenyl diphospho-[N-acetyl-alpha-D-glucosaminyl-(1-&gt;4)]-N-acetyl-alpha-D-muramoyl-L-alanyl-D-glutamyl-meso-2,6-diaminopimeloyl-D-alanyl-D-alanine + UDP + H(+). It functions in the pathway cell wall biogenesis; peptidoglycan biosynthesis. Its function is as follows. Cell wall formation. Catalyzes the transfer of a GlcNAc subunit on undecaprenyl-pyrophosphoryl-MurNAc-pentapeptide (lipid intermediate I) to form undecaprenyl-pyrophosphoryl-MurNAc-(pentapeptide)GlcNAc (lipid intermediate II). This is UDP-N-acetylglucosamine--N-acetylmuramyl-(pentapeptide) pyrophosphoryl-undecaprenol N-acetylglucosamine transferase from Ruegeria pomeroyi (strain ATCC 700808 / DSM 15171 / DSS-3) (Silicibacter pomeroyi).